The primary structure comprises 612 residues: MCGIVGGVAERNIAEILIEGLKRLEYRGYDSAGVALINQQQILRERRVGKVANLAEAVAQSKISGSLGIAHTRWATHGKPTENNAHPHTSGSVAVVHNGIIENYQELKDDLEALGYVFTSQTDTEVVAHLINHAMTEQHNLLDAVREVVPELKGAYALGIIHTDYPDELITVREGSPLVIGVGIGENFISSDQLALLPVTNRFVYLEEGDIARLTRDSIEIYAHGVKIERPVKELDASVSNASKGEYKHYMLKEIYEQPEAIQQTISQALNGNALREDFLQFAEADFNQIQNVQIIACGTSYHAGMIAKYWFEQLIGVPCQVEIASEFRYRSPVIVANTLYICISQSGETADTLAALRDTQKRAKAKDIQISTLTICNVATSSMVRETDHHLLTLAGPEIGVASTKAFTTQLAALMLLILKIGQVKEQIAAEQIAEIASQLWHCPKVMLDTLQHNAEILRLSELFVEKQHCLFLGRGTHYPIALEGALKLKEISYIHAEGYAAGELKHGPLALVDNEMPVVILAPHDDMLDKLKSNMEEVQARGGELFVFADENSGVREKDRQHVVLIPEVNAWLAPIVYSIPVQLLSYHVAVLRGTDVDQPRNLAKSVTVE.

Cysteine 2 serves as the catalytic Nucleophile; for GATase activity. A Glutamine amidotransferase type-2 domain is found at cysteine 2 to aspartate 217. SIS domains are found at residues alanine 283–glutamine 428 and leucine 461–proline 602. The For Fru-6P isomerization activity role is filled by lysine 607.

In terms of assembly, homodimer.

Its subcellular location is the cytoplasm. It catalyses the reaction D-fructose 6-phosphate + L-glutamine = D-glucosamine 6-phosphate + L-glutamate. Its function is as follows. Catalyzes the first step in hexosamine metabolism, converting fructose-6P into glucosamine-6P using glutamine as a nitrogen source. The chain is Glutamine--fructose-6-phosphate aminotransferase [isomerizing] from Acinetobacter baylyi (strain ATCC 33305 / BD413 / ADP1).